The sequence spans 162 residues: Tegument protein BLRF2 (162 aa).

Residues valine 12–glycine 43 are a coiled coil. Positions glycine 121–aspartate 162 are disordered. Residues arginine 151–aspartate 162 are compositionally biased toward basic and acidic residues.

Belongs to the herpesviridae BLRF2 family. As to quaternary structure, homooligomer; homooligomerizes and binds double-stranded DNA (dsDNA) cooperatively. Interacts with host CGAS.

It is found in the virion tegument. Its subcellular location is the host cytoplasm. In terms of biological role, plays a role in the inhibition of host innate immune system by targeting the CGAS enzymatic activity which is the principal cytosolic DNA sensor that detects invading viral DNA. Acts by inhibiting CGAS-DNA phase separation: directly binds double-stranded DNA (dsDNA) in a length dependent but sequence independent manner and is able to form DNA-induced phase separation in infected cells. DNA phase separation of ORF52 mediates disruption of liquid-like droplets in which CGAS is activated, thereby preventing CGAS activity. The sequence is that of Tegument protein BLRF2 from Epstein-Barr virus (strain GD1) (HHV-4).